The chain runs to 336 residues: Biotin synthase (336 aa).

The Radical SAM core domain maps to 55-282 (NRVQLSKLLN…QSHVRLTAGR (228 aa)). Cys70, Cys74, and Cys77 together coordinate [4Fe-4S] cluster. [2Fe-2S] cluster is bound by residues Cys114, Cys145, Cys205, and Arg277.

Belongs to the radical SAM superfamily. Biotin synthase family. As to quaternary structure, homodimer. Requires [4Fe-4S] cluster as cofactor. [2Fe-2S] cluster serves as cofactor.

The enzyme catalyses (4R,5S)-dethiobiotin + (sulfur carrier)-SH + 2 reduced [2Fe-2S]-[ferredoxin] + 2 S-adenosyl-L-methionine = (sulfur carrier)-H + biotin + 2 5'-deoxyadenosine + 2 L-methionine + 2 oxidized [2Fe-2S]-[ferredoxin]. The protein operates within cofactor biosynthesis; biotin biosynthesis; biotin from 7,8-diaminononanoate: step 2/2. Its function is as follows. Catalyzes the conversion of dethiobiotin (DTB) to biotin by the insertion of a sulfur atom into dethiobiotin via a radical-based mechanism. The polypeptide is Biotin synthase (Brucella anthropi (strain ATCC 49188 / DSM 6882 / CCUG 24695 / JCM 21032 / LMG 3331 / NBRC 15819 / NCTC 12168 / Alc 37) (Ochrobactrum anthropi)).